The following is a 186-amino-acid chain: UPF0397 protein LCABL_04350 (186 aa).

Transmembrane regions (helical) follow at residues 12–32, 45–65, 77–97, 112–132, and 150–170; these read VVAIGIGTAILFILKRFAVIP, GFLGFIATLFGPIAGFFIGFL, TPWWTWVFTTGLVGMVIGLFW, IVSFNLLQIITNVVSWSLIAP, and GIVSAISNSIATGVIGTILLV.

This sequence belongs to the UPF0397 family.

It localises to the cell membrane. This chain is UPF0397 protein LCABL_04350, found in Lacticaseibacillus casei (strain BL23) (Lactobacillus casei).